Here is a 388-residue protein sequence, read N- to C-terminus: Na(+)/H(+) antiporter NhaA (388 aa).

Helical transmembrane passes span 14 to 34 (GGII…MGAT), 59 to 79 (MLLW…GLEV), 95 to 115 (AFPV…YLAF), 125 to 145 (GWAI…ALLG), 154 to 174 (IFLM…IALF), 179 to 199 (LSIV…LLNL), 219 to 239 (VLKS…FIPL), 254 to 274 (VLHP…NAGV), 292 to 312 (IIAG…WLAL), 328 to 348 (IMAV…IASL), and 360 to 380 (WAKL…YSWL).

It belongs to the NhaA Na(+)/H(+) (TC 2.A.33) antiporter family.

The protein resides in the cell inner membrane. The catalysed reaction is Na(+)(in) + 2 H(+)(out) = Na(+)(out) + 2 H(+)(in). In terms of biological role, na(+)/H(+) antiporter that extrudes sodium in exchange for external protons. This chain is Na(+)/H(+) antiporter NhaA, found in Salmonella paratyphi A (strain ATCC 9150 / SARB42).